The sequence spans 649 residues: MRLFIAEKPSLGRAIADVLPKPHRKGDGFIECGNGQVVTWCIGHLLEQAQPDAYDSRYARWNLADLPIVPEKWQLQPRPSVTKQLNVIKRFLHQAGEIIHAGDPDREGQLLVDEVLDYLQLPAEKRQQVRRCLINDLNPQAVERAIDRLRANSDFVPLCVSALARARADWLYGINMTRAYTILGRNAGYQGVLSVGRVQTPVLGLVVRRDEEIENFVAKDFFEVKAHIVTPADERFTAIWQPSEACEPYQDEEGRLLHRPLAEHVVNRINGQPALVTSYNDKRESESAPLPFSLSTLQIEAAKRFGLSAQNVLDICQKLYETHKLITYPRSDCRYLPEEHFAGRQAVMNAISVHAPDLLPQPVVNPDTRNRCWDDKKVDAHHAIIPTARSSSVHLTENEAKVYTLIARQYLMQFCPDAVFRKCVIELEIAKGKFVAKARFLAEAGWRTLLGSKERDEENDGTPLPVVAKGDELLCEKGEVVERQTQPPRHFTDATLLSAMTGIARFVQDKDLKKILRATDGLGTEATRAGIIELLFKRSFLTKKGRYIHSTDAGKALIHSLPEMAARPDMTAHWESVLTQISEKQCRYQDFMQPLVGTLYQLIEQAKRTPVKRFRGIVAPGGGDKKKSAPRKRAGKKSPPAAETGRQTE.

Positions 1–134 (MRLFIAEKPS…KRQQVRRCLI (134 aa)) constitute a Toprim domain. E7, D103, and D105 together coordinate Mg(2+). Positions 155 to 603 (FVPLCVSALA…PLVGTLYQLI (449 aa)) constitute a Topo IA-type catalytic domain. The tract at residues 194–199 (SVGRVQ) is interaction with DNA. Y328 serves as the catalytic O-(5'-phospho-DNA)-tyrosine intermediate. The segment at 614–649 (FRGIVAPGGGDKKKSAPRKRAGKKSPPAAETGRQTE) is disordered.

This sequence belongs to the type IA topoisomerase family. Mg(2+) is required as a cofactor.

It catalyses the reaction ATP-independent breakage of single-stranded DNA, followed by passage and rejoining.. Functionally, releases the supercoiling and torsional tension of DNA, which is introduced during the DNA replication and transcription, by transiently cleaving and rejoining one strand of the DNA duplex. Introduces a single-strand break via transesterification at a target site in duplex DNA. The scissile phosphodiester is attacked by the catalytic tyrosine of the enzyme, resulting in the formation of a DNA-(5'-phosphotyrosyl)-enzyme intermediate and the expulsion of a 3'-OH DNA strand. The free DNA strand then undergoes passage around the unbroken strand, thus removing DNA supercoils. Finally, in the religation step, the DNA 3'-OH attacks the covalent intermediate to expel the active-site tyrosine and restore the DNA phosphodiester backbone. This chain is DNA topoisomerase 3, found in Salmonella typhimurium (strain LT2 / SGSC1412 / ATCC 700720).